Here is a 271-residue protein sequence, read N- to C-terminus: MPPLRETVRVHGLSASKALGQNFLFDEQLLDRIAAIPGDLDGATVFEVGPGPGGLTRALLRTGARVIAVERDERCLPLLADLAEAFPGQLTVIADDAMAVDVDALTGGDPYHIVANLPYNVGTALFTRWLEPAAWPPRWLSLTLMFQLEVAERIVAPVGTSAYGRLAVLAQWRARARIAMKVHRSAFTPPPKVMSAIVQLTPADQPPGVDPRILSRLTEKGFGQRRKMLRQSLKGIDGAVAAAEALGIDPTRRAETVSVAEWVALARALGR.

Positions 22, 24, 49, 70, 96, and 116 each coordinate S-adenosyl-L-methionine.

It belongs to the class I-like SAM-binding methyltransferase superfamily. rRNA adenine N(6)-methyltransferase family. RsmA subfamily.

Its subcellular location is the cytoplasm. It carries out the reaction adenosine(1518)/adenosine(1519) in 16S rRNA + 4 S-adenosyl-L-methionine = N(6)-dimethyladenosine(1518)/N(6)-dimethyladenosine(1519) in 16S rRNA + 4 S-adenosyl-L-homocysteine + 4 H(+). Functionally, specifically dimethylates two adjacent adenosines (A1518 and A1519) in the loop of a conserved hairpin near the 3'-end of 16S rRNA in the 30S particle. May play a critical role in biogenesis of 30S subunits. This Sphingopyxis alaskensis (strain DSM 13593 / LMG 18877 / RB2256) (Sphingomonas alaskensis) protein is Ribosomal RNA small subunit methyltransferase A.